The sequence spans 283 residues: Thymidylate synthase (283 aa).

Residue R22 participates in dUMP binding. The Nucleophile role is filled by C160. Residues 180–183 (RSCD), N191, and 221–223 (HIY) each bind dUMP. D183 contacts (6R)-5,10-methylene-5,6,7,8-tetrahydrofolate. S282 is a binding site for (6R)-5,10-methylene-5,6,7,8-tetrahydrofolate.

It belongs to the thymidylate synthase family. Bacterial-type ThyA subfamily. In terms of assembly, homodimer.

It localises to the cytoplasm. The enzyme catalyses dUMP + (6R)-5,10-methylene-5,6,7,8-tetrahydrofolate = 7,8-dihydrofolate + dTMP. It functions in the pathway pyrimidine metabolism; dTTP biosynthesis. Its function is as follows. Catalyzes the reductive methylation of 2'-deoxyuridine-5'-monophosphate (dUMP) to 2'-deoxythymidine-5'-monophosphate (dTMP) while utilizing 5,10-methylenetetrahydrofolate (mTHF) as the methyl donor and reductant in the reaction, yielding dihydrofolate (DHF) as a by-product. This enzymatic reaction provides an intracellular de novo source of dTMP, an essential precursor for DNA biosynthesis. The polypeptide is Thymidylate synthase (Vibrio vulnificus (strain YJ016)).